The primary structure comprises 324 residues: Aspartate carbamoyltransferase catalytic subunit (324 aa).

Carbamoyl phosphate contacts are provided by Arg-71 and Thr-72. Lys-99 is an L-aspartate binding site. Carbamoyl phosphate contacts are provided by Arg-121, His-151, and Gln-154. Positions 184 and 239 each coordinate L-aspartate. Residues Gly-280 and Pro-281 each coordinate carbamoyl phosphate.

This sequence belongs to the aspartate/ornithine carbamoyltransferase superfamily. ATCase family. Heterododecamer (2C3:3R2) of six catalytic PyrB chains organized as two trimers (C3), and six regulatory PyrI chains organized as three dimers (R2).

It carries out the reaction carbamoyl phosphate + L-aspartate = N-carbamoyl-L-aspartate + phosphate + H(+). It functions in the pathway pyrimidine metabolism; UMP biosynthesis via de novo pathway; (S)-dihydroorotate from bicarbonate: step 2/3. Catalyzes the condensation of carbamoyl phosphate and aspartate to form carbamoyl aspartate and inorganic phosphate, the committed step in the de novo pyrimidine nucleotide biosynthesis pathway. This Cupriavidus necator (strain ATCC 17699 / DSM 428 / KCTC 22496 / NCIMB 10442 / H16 / Stanier 337) (Ralstonia eutropha) protein is Aspartate carbamoyltransferase catalytic subunit.